We begin with the raw amino-acid sequence, 390 residues long: NADH-dependent butanol dehydrogenase B (390 aa).

The protein belongs to the iron-containing alcohol dehydrogenase family. As to quaternary structure, homodimer.

The protein operates within alcohol metabolism; butanol biosynthesis. In Clostridium acetobutylicum (strain ATCC 824 / DSM 792 / JCM 1419 / IAM 19013 / LMG 5710 / NBRC 13948 / NRRL B-527 / VKM B-1787 / 2291 / W), this protein is NADH-dependent butanol dehydrogenase B (bdhB).